A 232-amino-acid polypeptide reads, in one-letter code: GTP cyclohydrolase III (232 aa).

It belongs to the archaeal-type GTP cyclohydrolase family.

The enzyme catalyses GTP + 3 H2O = 2-amino-5-formylamino-6-(5-phospho-D-ribosylamino)pyrimidin-4(3H)-one + 2 phosphate + 2 H(+). Its function is as follows. Catalyzes the formation of 2-amino-5-formylamino-6-ribofuranosylamino-4(3H)-pyrimidinone ribonucleotide monophosphate and inorganic phosphate from GTP. Also has an independent pyrophosphate phosphohydrolase activity. The sequence is that of GTP cyclohydrolase III from Saccharolobus islandicus (strain Y.G.57.14 / Yellowstone #1) (Sulfolobus islandicus).